Consider the following 131-residue polypeptide: Small ribosomal subunit protein uS12 (131 aa).

Asp89 is subject to 3-methylthioaspartic acid.

Belongs to the universal ribosomal protein uS12 family. In terms of assembly, part of the 30S ribosomal subunit. Contacts proteins S8 and S17. May interact with IF1 in the 30S initiation complex.

With S4 and S5 plays an important role in translational accuracy. Its function is as follows. Interacts with and stabilizes bases of the 16S rRNA that are involved in tRNA selection in the A site and with the mRNA backbone. Located at the interface of the 30S and 50S subunits, it traverses the body of the 30S subunit contacting proteins on the other side and probably holding the rRNA structure together. The combined cluster of proteins S8, S12 and S17 appears to hold together the shoulder and platform of the 30S subunit. The sequence is that of Small ribosomal subunit protein uS12 from Campylobacter concisus (strain 13826).